Reading from the N-terminus, the 206-residue chain is Small ribosomal subunit protein uS2 (206 aa).

Belongs to the universal ribosomal protein uS2 family.

The protein is Small ribosomal subunit protein uS2 of Methanothrix thermoacetophila (strain DSM 6194 / JCM 14653 / NBRC 101360 / PT) (Methanosaeta thermophila).